A 2615-amino-acid polypeptide reads, in one-letter code: Polycystin-1-like protein 1 (2615 aa).

Topologically, residues 1–1524 are extracellular; the sequence is MDVDEDQHAV…VSSISEFQSH (1524 aa). Positions 17–93 are disordered; that stretch reads IQANPELCVS…GTNSFSNPPP (77 aa). Asparagine 224, asparagine 297, asparagine 306, asparagine 390, asparagine 440, asparagine 534, and asparagine 619 each carry an N-linked (GlcNAc...) asparagine glycan. PKD domains are found at residues 291-373 and 375-456; these read SVSV…VQKR and MANR…VREP. The REJ domain maps to 457–1349; it reads CQPPPVKNMG…GEEDYLHKRN (893 aa). Residues 749–815 form a disordered region; the sequence is SSKSDLPSNL…GEPMEEYSSL (67 aa). Over residues 778 to 789 the composition is skewed to polar residues; sequence ALSNLGSISAES. Residues 1364–1512 form the GAIN-B domain; the sequence is RFTGLSENSQ…SVLRRKLNAT (149 aa). Asparagine 1458 is a glycosylation site (N-linked (GlcNAc...) asparagine). An intrachain disulfide couples cysteine 1468 to cysteine 1494. Positions 1468–1512 are GPS; the sequence is CVFWDKTEWRSEGPYPQPGSSPEKVNCSYHHLAPVSVLRRKLNAT. Asparagine 1510 carries an N-linked (GlcNAc...) asparagine glycan. Residues 1525–1545 form a helical membrane-spanning segment; it reads PHNLLPGIFSAFLLVLYGILV. At 1546–1732 the chain is on the cytoplasmic side; sequence SKSRYVDCHE…PPSRSYLHTQ (187 aa). The PLAT domain occupies 1573 to 1690; that stretch reads QLYAVVIDTG…LGGHVLREFF (118 aa). A helical transmembrane segment spans residues 1733-1753; sequence RLAVSFCLLCVYSCLTALVTV. The Extracellular portion of the chain corresponds to 1754–1772; that stretch reads RDHQQRPLDVGPTAITLEP. Residues 1773–1793 traverse the membrane as a helical segment; it reads FCMALLCTLLACPVAQLLSLL. Over 1794 to 1905 the chain is Cytoplasmic; the sequence is FRCSKEARGD…ELGSQKSRVC (112 aa). The segment at 1807–1840 is disordered; the sequence is STQWPLRGVKTETPQGHDSSGRPDSRQPSPHPTS. The helical transmembrane segment at 1906–1926 threads the bilayer; the sequence is LLWSSSVAWAISGSASLACGL. Over 1927-1950 the chain is Extracellular; it reads GTGFLGYWFVPAQCMWWLYLLLLS. Residues 1951-1971 form a helical membrane-spanning segment; it reads LVCCAFITQPLMICLAALVFA. The Cytoplasmic portion of the chain corresponds to 1972–2057; sequence WKRKHDSKFF…ERLRRESIMQ (86 aa). Residues 2058–2078 traverse the membrane as a helical segment; the sequence is AALRDMTTHSIMLLLLLFIAY. The Extracellular portion of the chain corresponds to 2079–2288; that stretch reads GRFCPGEISL…IFYSDSALKY (210 aa). The helical transmembrane segment at 2289 to 2309 threads the bilayer; that stretch reads LLMLSELLFLVLNVIHLCFQL. Residues 2310 to 2332 lie on the Cytoplasmic side of the membrane; sequence WGMTTKGILSYWRKPRHWLELSM. A helical transmembrane segment spans residues 2333–2353; the sequence is VGVAIAYYAASGHLTTLAVNI. Over 2354 to 2379 the chain is Extracellular; the sequence is TDQFHKGLYQRLVDIGLMVSWHQRAR. Residues 2380-2400 traverse the membrane as a helical segment; the sequence is CLQGILLFLWMLKYVHLLSSL. Residues 2401-2405 are Cytoplasmic-facing; the sequence is STMTP. A helical transmembrane segment spans residues 2406 to 2426; that stretch reads FSAVTCFPLFRVLLVGALLLA. Residues 2427-2483 are Extracellular-facing; the sequence is AHYHSRWFLLFTGTLSHGTSAEAFPGLLLQFPGRSKKDSWHNCLKSDHGVMRCYYGT. A helical transmembrane segment spans residues 2484–2504; sequence LFLLLATLGFRMLRATFLTVF. The Cytoplasmic segment spans residues 2505-2615; the sequence is QNRKSSHRKP…VSGPLAAESE (111 aa). The interval 2589-2615 is disordered; it reads RAGDSPPVGSSEYQATGVSGPLAAESE.

This sequence belongs to the polycystin family. As to quaternary structure, heterodimer. Interacts with PKD2 to form a calcium channel. Interacts with PKD2L1; to form ciliary calcium channel. May interact with GNA12, GNAS, GNAI1 and GNAI2. As to expression, in testis, strong expression in Leydig cells, low level in seminal ducts, myoid cells and tunica vaginalis. Other tissues, including adrenal gland and heart myocardium, also show low expression. In embryo, highly expressed in the node.

Its subcellular location is the cell projection. It is found in the cilium membrane. Component of a calcium-permeant ion channel formed by PKD1L2 and PKD1L1 in primary cilia, where it controls cilium calcium concentration, without affecting cytoplasmic calcium concentration, and regulates sonic hedgehog/SHH signaling and GLI2 transcription. The PKD1L1:PKD2L1 channel complex is mechanosensitive only at high pressures and is highly temperature sensitive. Also involved in left/right axis specification downstream of nodal flow by forming a complex with PKD2 in cilia to facilitate flow detection in left/right patterning. May function as a G-protein-coupled receptor. The protein is Polycystin-1-like protein 1 of Mus musculus (Mouse).